We begin with the raw amino-acid sequence, 177 residues long: dCTP deaminase, dUMP-forming (177 aa).

Residues arginine 98–arginine 103, asparagine 110, aspartate 115–phenylalanine 118, threonine 123–glutamate 125, glutamine 144, tyrosine 157–lysine 160, and glutamine 164 contribute to the dCTP site. Residue glutamate 125 is the Proton donor/acceptor of the active site.

Belongs to the dCTP deaminase family. As to quaternary structure, homotrimer. Mg(2+) serves as cofactor.

The catalysed reaction is dCTP + 2 H2O = dUMP + NH4(+) + diphosphate. It participates in pyrimidine metabolism; dUMP biosynthesis; dUMP from dCTP: step 1/1. Its activity is regulated as follows. Inhibited by dTTP. Its function is as follows. Bifunctional enzyme that catalyzes both the deamination of dCTP to dUTP and the hydrolysis of dUTP to dUMP without releasing the toxic dUTP intermediate. The polypeptide is dCTP deaminase, dUMP-forming (Halalkalibacterium halodurans (strain ATCC BAA-125 / DSM 18197 / FERM 7344 / JCM 9153 / C-125) (Bacillus halodurans)).